A 307-amino-acid polypeptide reads, in one-letter code: Isethionate sulfite-lyase activating enzyme (307 aa).

The Radical SAM core domain occupies 22-307; that stretch reads HDGPGIRTVV…EAVVAQTADS (286 aa). Residues Cys-36, Cys-40, Cys-43, Cys-62, Cys-68, Cys-71, Cys-75, Cys-95, Cys-98, Cys-102, and Cys-106 each contribute to the [4Fe-4S] cluster site. 42 to 44 contributes to the S-adenosyl-L-methionine binding site; sequence WCS. 4Fe-4S ferredoxin-type domains follow at residues 53 to 85 and 86 to 117; these read VELA…RAED and DTIS…YGAH. S-adenosyl-L-methionine-binding positions include Gly-146, 195–197, and His-268; that span reads DIK.

This sequence belongs to the organic radical-activating enzymes family. Monomer. [4Fe-4S] cluster is required as a cofactor.

The enzyme catalyses glycyl-[protein] + reduced [flavodoxin] + S-adenosyl-L-methionine = glycin-2-yl radical-[protein] + semiquinone [flavodoxin] + 5'-deoxyadenosine + L-methionine + H(+). The protein operates within organosulfur degradation; alkanesulfonate degradation. Its function is as follows. Involved in an anaerobic respiration pathway that converts the sulfonate isethionate (2-hydroxyethanesulfonate) to ammonia, acetate and sulfide. Catalyzes activation of the isethionate sulfite-lyase IseG under anaerobic conditions by generation of an organic free radical on a glycine residue, via a homolytic cleavage of S-adenosyl-L-methionine (SAM). The polypeptide is Isethionate sulfite-lyase activating enzyme (Nitratidesulfovibrio vulgaris (strain ATCC 29579 / DSM 644 / CCUG 34227 / NCIMB 8303 / VKM B-1760 / Hildenborough) (Desulfovibrio vulgaris)).